The chain runs to 261 residues: Serine/arginine-rich splicing factor 12 (261 aa).

The RRM domain maps to 10–88 (TSLFIRNVAD…RQIEIQFAQG (79 aa)). The interval 86 to 261 (AQGDRKTPGQ…SRSYRHKNSW (176 aa)) is disordered. Basic and acidic residues predominate over residues 88–109 (GDRKTPGQMKSKERHPCSPSDH). Composition is skewed to basic residues over residues 110 to 122 (RRSR…RTRS) and 178 to 191 (GRSR…RSKS). Residues 192-209 (IGKSQSSSPQKQTSSGTK) show a composition bias toward low complexity. Residues 230–239 (GYTNSETKVQ) show a composition bias toward polar residues. Positions 240 to 261 (TAKHSHFRSHSRSRSYRHKNSW) are enriched in basic residues.

This sequence belongs to the splicing factor SR family. Expressed in testis.

The protein resides in the nucleus. Splicing factor that seems to antagonize SR proteins in pre-mRNA splicing regulation. The protein is Serine/arginine-rich splicing factor 12 (SRSF12) of Homo sapiens (Human).